We begin with the raw amino-acid sequence, 162 residues long: Transcription antitermination protein RfaH (162 aa).

Belongs to the RfaH family. As to quaternary structure, interacts with both the nontemplate DNA and the RNA polymerase (RNAP). Monomer in solution.

Its function is as follows. Enhances distal genes transcription elongation in a specialized subset of operons that encode extracytoplasmic components. RfaH is recruited into a multi-component RNA polymerase complex by the ops element, which is a short conserved DNA sequence located downstream of the main promoter of these operons. Once bound, RfaH suppresses pausing and inhibits Rho-dependent and intrinsic termination at a subset of sites. Termination signals are bypassed, which allows complete synthesis of long RNA chains. Enhances expression of several operons involved in synthesis of lipopolysaccharides, exopolysaccharides, hemolysin, and sex factor. Also negatively controls expression and surface presentation of AG43 and possibly another AG43-independent factor that mediates cell-cell interactions and biofilm formation. In Escherichia coli (strain K12), this protein is Transcription antitermination protein RfaH.